Reading from the N-terminus, the 359-residue chain is Peptide chain release factor 1 (359 aa).

Q236 carries the post-translational modification N5-methylglutamine.

The protein belongs to the prokaryotic/mitochondrial release factor family. Post-translationally, methylated by PrmC. Methylation increases the termination efficiency of RF1.

It is found in the cytoplasm. Its function is as follows. Peptide chain release factor 1 directs the termination of translation in response to the peptide chain termination codons UAG and UAA. The protein is Peptide chain release factor 1 of Streptococcus agalactiae.